We begin with the raw amino-acid sequence, 380 residues long: Putative RNA ligase (380 aa).

Its function is as follows. Putative RNA ligase. Is able to catalyze the adenylation reaction of ssDNA 3'-terminal phosphate (ssDNA 3'p) to 3'-adenylated DNA (ssDNA 3'pp5'A). The chain is Putative RNA ligase from Thermovibrio ammonificans (strain DSM 15698 / JCM 12110 / HB-1).